A 253-amino-acid polypeptide reads, in one-letter code: Phosphate import ATP-binding protein PstB (253 aa).

The 241-residue stretch at 8–248 (IQVRDLDLFY…PRDKRTEDYI (241 aa)) folds into the ABC transporter domain. Position 40–47 (40–47 (GPSGCGKS)) interacts with ATP.

This sequence belongs to the ABC transporter superfamily. Phosphate importer (TC 3.A.1.7) family. In terms of assembly, the complex is composed of two ATP-binding proteins (PstB), two transmembrane proteins (PstC and PstA) and a solute-binding protein (PstS).

The protein resides in the cell membrane. It carries out the reaction phosphate(out) + ATP + H2O = ADP + 2 phosphate(in) + H(+). Its function is as follows. Part of the ABC transporter complex PstSACB involved in phosphate import. Responsible for energy coupling to the transport system. This Clostridium perfringens (strain ATCC 13124 / DSM 756 / JCM 1290 / NCIMB 6125 / NCTC 8237 / Type A) protein is Phosphate import ATP-binding protein PstB.